Here is a 428-residue protein sequence, read N- to C-terminus: Tyrosine--tRNA ligase (428 aa).

Y36 contacts L-tyrosine. The 'HIGH' region motif lies at 41 to 50 (PTAPSLHAGH). Positions 171 and 175 each coordinate L-tyrosine. The short motif at 231–235 (KFGKS) is the 'KMSKS' region element. K234 is a binding site for ATP. The region spanning 359-416 (DSIVDLLVETGLAASKGAARRNVAEGGVYVNNIRIESDEWIPQHSDFLHERWLVLRRG) is the S4 RNA-binding domain.

Belongs to the class-I aminoacyl-tRNA synthetase family. TyrS type 1 subfamily. As to quaternary structure, homodimer.

The protein resides in the cytoplasm. The catalysed reaction is tRNA(Tyr) + L-tyrosine + ATP = L-tyrosyl-tRNA(Tyr) + AMP + diphosphate + H(+). Catalyzes the attachment of tyrosine to tRNA(Tyr) in a two-step reaction: tyrosine is first activated by ATP to form Tyr-AMP and then transferred to the acceptor end of tRNA(Tyr). The polypeptide is Tyrosine--tRNA ligase (Mycolicibacterium fortuitum (Mycobacterium fortuitum)).